The sequence spans 405 residues: Aspartokinase (405 aa).

7–10 (KYGG) lines the ATP pocket. 25–30 (RIAHYR) serves as a coordination point for substrate. Serine 41 contacts ATP. Substrate-binding positions include 47–49 (TDE), glutamate 74, 125–126 (LE), 150–153 (RGGS), and serine 153. ATP is bound by residues 173–174 (TD), 179–184 (YTTDPH), and arginine 209. ACT domains follow at residues 263-342 (IGLI…IAKV) and 344-405 (IVGV…LDKA). Residues aspartate 270, 288–290 (AVD), glutamine 294, 355–356 (VP), 369–370 (NI), and 376–377 (SE) contribute to the substrate site.

It belongs to the aspartokinase family. As to quaternary structure, tetramer consisting of 2 isoforms Alpha (catalytic and regulation) and of a homodimer of 2 isoforms Beta (regulation).

It catalyses the reaction L-aspartate + ATP = 4-phospho-L-aspartate + ADP. It participates in amino-acid biosynthesis; L-lysine biosynthesis via DAP pathway; (S)-tetrahydrodipicolinate from L-aspartate: step 1/4. The protein operates within amino-acid biosynthesis; L-methionine biosynthesis via de novo pathway; L-homoserine from L-aspartate: step 1/3. Its pathway is amino-acid biosynthesis; L-threonine biosynthesis; L-threonine from L-aspartate: step 1/5. Its function is as follows. Catalyzes the phosphorylation of the beta-carboxyl group of aspartic acid with ATP to yield 4-phospho-L-aspartate, which is involved in the branched biosynthetic pathway leading to the biosynthesis of amino acids lysine, threonine, isoleucine and methionine. The chain is Aspartokinase (ask) from Thermus thermophilus (strain ATCC BAA-163 / DSM 7039 / HB27).